Here is a 227-residue protein sequence, read N- to C-terminus: Phosphoglycolate phosphatase (227 aa).

D11 (nucleophile) is an active-site residue. Mg(2+)-binding residues include D11 and D13. K155 contributes to the substrate binding site. Residues D178 and D182 each contribute to the Mg(2+) site.

It belongs to the archaeal SPP-like hydrolase family. Requires Mg(2+) as cofactor.

It carries out the reaction 2-phosphoglycolate + H2O = glycolate + phosphate. Functionally, catalyzes the dephosphorylation of 2-phosphoglycolate. In Haloarcula marismortui (strain ATCC 43049 / DSM 3752 / JCM 8966 / VKM B-1809) (Halobacterium marismortui), this protein is Phosphoglycolate phosphatase.